The primary structure comprises 155 residues: WPP domain-containing protein 1 (155 aa).

Disordered regions lie at residues 1 to 41 and 124 to 155; these read MAET…VTIS and SVKAKSNVASPPPKDGDGIESAVDSKIDSSEA. The span at 7–39 shows a compositional bias: low complexity; the sequence is ESITTSSPPPISETENSTTLPTTETEKNPNPVT. The segment at 28–131 is WPP; the sequence is TTETEKNPNP…LESVKAKSNV (104 aa). A compositionally biased stretch (basic and acidic residues) spans 146-155; it reads VDSKIDSSEA.

Binds to FPP proteins. Interacts with WAP, WIP1, WIP2 and WIP3 through its WPP domain. Interacts with HSP70-1, HSP70-3 and WIT1. Component of a ternary complex composed of WPP1, HSP70-1 and WIT1. Expressed in roots, stems and leaves.

The protein resides in the nucleus envelope. Its subcellular location is the cytoplasm. It localises to the nucleus. It is found in the golgi apparatus. The protein localises to the nucleus matrix. Functionally, regulates the mitotic activity in roots. Plays a role with HSP70-1 in facilitating WIT1 nuclear envelope targeting. In Arabidopsis thaliana (Mouse-ear cress), this protein is WPP domain-containing protein 1 (WPP1).